Here is a 353-residue protein sequence, read N- to C-terminus: Fasciclin-like arabinogalactan protein 21 (353 aa).

The N-terminal stretch at 1–28 (MGCCSSDCFVYFILSIALAFMAISTTLR) is a signal peptide. Residues Asn51, Asn81, Asn94, Asn200, Asn249, and Asn315 are each glycosylated (N-linked (GlcNAc...) asparagine). One can recognise an FAS1 1 domain in the interval 83–181 (TLFAIEDASF…HGVIGPFSPL (99 aa)). The region spanning 254–352 (TILATPNLVS…GISHTLEIPH (99 aa)) is the FAS1 2 domain.

This sequence belongs to the fasciclin-like AGP family.

It localises to the secreted. May be a cell surface adhesion protein. In Arabidopsis thaliana (Mouse-ear cress), this protein is Fasciclin-like arabinogalactan protein 21 (FLA21).